The primary structure comprises 644 residues: MNQMQSYADVHPPHMSAATAHAPASAAPSGISHYAYPPQSSMMQPGQHQYGPTPPGYPSYGYSNGVPSGLPASSSMNNAMVPSTLQLPAMSSSGPSPSLSGAQSYAPHSFDHTGQVAPPGMKPRVTATLWEDEGSLCFQVEAKGVCVARREDNHMINGTKLLNVAGMTRGRRDGILKSEKTRHVVKIGPMHLKGVWIPFERALEFANKEKITEQLYPLFVHDIGALLYHPSNQTRASVGSAAMAAVDRRRPDSMQTQRYISGPTTSQPPSLHHHHSMSNPIGAPMSQAPHALQPHPSAGRPGLDRAHTFPTPPTSASSIMGMSNSGSSYEWSGANVQTPQGSQPLSIDTGLSNTRSVPTTPATTPPGAVQQAISYGSNQSYDNSRPMYSGPPSQPGQYNTQGQSMMGYRPDSGYTKTEMAPPSRLADVSEEGDVKHSEGMMPQGNSQVVAPAPGPEGDHEHDNEYTHSTASYNGSRGPYGYASNGNAGGLHPEHPHMSPEMNGSPHQNGSGRATPRTTTTSQTQWNSGYPTPQRQGPPSSNLYNVMSDPRGAPNGNAPHDAYPGPGAVPQYASQGYPPANGNAKRGRDDDDEDPYRPDSVQSDDMGGLKRRKTMEGGAVGGAYAQDPTPGLQRAHTMTAQRARR.

Low complexity predominate over residues Ala-18–His-33. Disordered regions lie at residues Ala-18–Pro-58 and Gln-86–Gly-120. Positions Pro-38 to Gln-47 are enriched in polar residues. The segment covering Leu-87 to Ser-104 has biased composition (low complexity). The region spanning Arg-124 to Pro-230 is the HTH APSES-type domain. The segment at residues Gly-158–Glu-179 is a DNA-binding region (H-T-H motif). A disordered region spans residues Gly-239–Arg-644. The span at Ser-253–Pro-269 shows a compositional bias: polar residues. Residues Ser-315–Ser-328 show a composition bias toward low complexity. 3 stretches are compositionally biased toward polar residues: residues Ala-334–Val-357, Gln-371–Asn-383, and Pro-395–Ser-404. Positions Glu-456–Tyr-465 are enriched in basic and acidic residues. A compositionally biased stretch (low complexity) spans Gly-509–Gln-524. Residues Trp-525 to Asn-544 show a composition bias toward polar residues. The interval Lys-584–Lys-612 is nuclear localization domain. The segment covering His-635 to Arg-644 has biased composition (polar residues).

The protein belongs to the EFG1/PHD1/stuA family.

Its subcellular location is the nucleus. Its function is as follows. Transcription factor that regulates asexual reproduction. Binds the StuA-response elements (StRE) with the consensus sequence 5'-(A/T)CGCG(T/A)N(A/C)-3' at the promoters of target genes. Required for pathogenicity and positively regulates the synthesis of the mycotoxin alternariol. Acts as a positive regulator of Tox3 but is not required for the expression of ToxA. Also acts as a central regulator of carbon metabolism including glycolysis, the TCA cycle, and amino acid synthesis. This chain is Cell pattern formation-associated protein StuA, found in Phaeosphaeria nodorum (strain SN15 / ATCC MYA-4574 / FGSC 10173) (Glume blotch fungus).